Reading from the N-terminus, the 218-residue chain is MSDNDELQQIAHLRREYTKGGLRRRDLPADPLTLFERWLSQACDAKLADPTAMVVATVDEHGQPYQRIVLLKHYDEKGMVFYTNLGSRKAHQIENNPRVSLLFPWHTLERQVMVIGKAERLSTLEVMKYFHSRPRDSQIGAWVSKQSSRISARGILESKFLELKQKFQQGEVPLPSFWGGFRVSLEQIEFWQGGEHRLHDRFLYQRENDAWKIDRLAP.

Residues 14–17 (RREY) and lysine 72 each bind substrate. FMN-binding positions include 67–72 (RIVLLK), 82–83 (YT), arginine 88, lysine 89, and glutamine 111. Substrate contacts are provided by tyrosine 129, arginine 133, and serine 137. FMN is bound by residues 146 to 147 (QS) and tryptophan 191. 197–199 (RLH) is a binding site for substrate. Arginine 201 provides a ligand contact to FMN.

Belongs to the pyridoxamine 5'-phosphate oxidase family. Homodimer. FMN is required as a cofactor.

It catalyses the reaction pyridoxamine 5'-phosphate + O2 + H2O = pyridoxal 5'-phosphate + H2O2 + NH4(+). It carries out the reaction pyridoxine 5'-phosphate + O2 = pyridoxal 5'-phosphate + H2O2. It functions in the pathway cofactor metabolism; pyridoxal 5'-phosphate salvage; pyridoxal 5'-phosphate from pyridoxamine 5'-phosphate: step 1/1. The protein operates within cofactor metabolism; pyridoxal 5'-phosphate salvage; pyridoxal 5'-phosphate from pyridoxine 5'-phosphate: step 1/1. In terms of biological role, catalyzes the oxidation of either pyridoxine 5'-phosphate (PNP) or pyridoxamine 5'-phosphate (PMP) into pyridoxal 5'-phosphate (PLP). The sequence is that of Pyridoxine/pyridoxamine 5'-phosphate oxidase from Escherichia coli (strain SMS-3-5 / SECEC).